Reading from the N-terminus, the 460-residue chain is Methylenetetrahydrofolate--tRNA-(uracil-5-)-methyltransferase TrmFO (460 aa).

12 to 17 (GGGLAG) lines the FAD pocket.

It belongs to the MnmG family. TrmFO subfamily. It depends on FAD as a cofactor.

It localises to the cytoplasm. The enzyme catalyses uridine(54) in tRNA + (6R)-5,10-methylene-5,6,7,8-tetrahydrofolate + NADH + H(+) = 5-methyluridine(54) in tRNA + (6S)-5,6,7,8-tetrahydrofolate + NAD(+). It catalyses the reaction uridine(54) in tRNA + (6R)-5,10-methylene-5,6,7,8-tetrahydrofolate + NADPH + H(+) = 5-methyluridine(54) in tRNA + (6S)-5,6,7,8-tetrahydrofolate + NADP(+). Its function is as follows. Catalyzes the folate-dependent formation of 5-methyl-uridine at position 54 (M-5-U54) in all tRNAs. The protein is Methylenetetrahydrofolate--tRNA-(uracil-5-)-methyltransferase TrmFO of Crocosphaera subtropica (strain ATCC 51142 / BH68) (Cyanothece sp. (strain ATCC 51142)).